Here is a 293-residue protein sequence, read N- to C-terminus: Foldase protein PrsA 2 (293 aa).

The N-terminal stretch at 1 to 20 is a signal peptide; that stretch reads MKKKLILGLVMMMALFSLAA. Residue cysteine 21 is the site of N-palmitoyl cysteine attachment. Cysteine 21 carries the S-diacylglycerol cysteine lipid modification. Residues 135-226 form the PpiC domain; the sequence is QPDITVSHIL…YGYHIIQMDK (92 aa).

The protein belongs to the PrsA family.

It localises to the cell membrane. It carries out the reaction [protein]-peptidylproline (omega=180) = [protein]-peptidylproline (omega=0). In terms of biological role, plays a major role in protein secretion by helping the post-translocational extracellular folding of several secreted proteins. In Listeria monocytogenes serotype 4b (strain F2365), this protein is Foldase protein PrsA 2.